The chain runs to 494 residues: DBIRD complex subunit ZNF326 (494 aa).

Disordered regions lie at residues 1 to 22 (MDREYGSYNQRSVNSYGNQSFS), 147 to 170 (AFGGRSNDAFGGPSKGRGRGRGQM), and 202 to 264 (KMAP…NSEK). Positions 7-22 (SYNQRSVNSYGNQSFS) are enriched in polar residues. Residues 200 to 221 (KRKMAPPFKPVGFFGKKQKLSK) carry the Bipartite nuclear localization signal motif. C2H2 AKAP95-type zinc fingers lie at residues 273–295 (CSFCKFRSFDEKGIEEHLTSATH) and 365–388 (CSACSVYVPALHSSVQLHLKSADH). The segment at 429–494 (PFETQPDEQQ…CDPLTTTDEV (66 aa)) is disordered. Acidic residues predominate over residues 433–451 (QPDEQQQEQEEEEEEEEQQ).

Belongs to the AKAP95 family. In terms of assembly, component of the DBIRD complex.

The protein resides in the nucleus. Its function is as follows. Core component of the DBIRD complex, a multiprotein complex that acts at the interface between core mRNP particles and RNA polymerase II (RNAPII) and integrates transcript elongation with the regulation of alternative splicing. This is DBIRD complex subunit ZNF326 (znf326) from Xenopus laevis (African clawed frog).